The primary structure comprises 206 residues: Nucleoside triphosphate pyrophosphatase (206 aa).

Aspartate 78 (proton acceptor) is an active-site residue.

Belongs to the Maf family. The cofactor is a divalent metal cation.

It is found in the cytoplasm. The enzyme catalyses a ribonucleoside 5'-triphosphate + H2O = a ribonucleoside 5'-phosphate + diphosphate + H(+). It catalyses the reaction a 2'-deoxyribonucleoside 5'-triphosphate + H2O = a 2'-deoxyribonucleoside 5'-phosphate + diphosphate + H(+). In terms of biological role, nucleoside triphosphate pyrophosphatase. May have a dual role in cell division arrest and in preventing the incorporation of modified nucleotides into cellular nucleic acids. The polypeptide is Nucleoside triphosphate pyrophosphatase (Prochlorococcus marinus (strain MIT 9312)).